A 100-amino-acid chain; its full sequence is uncharacterized protein (100 aa).

The segment at 42 to 84 (PGEPWRTAGGIGEGGAGGDGAAAGGEGDVHGRPAGAEDGEDGA) is disordered. Gly residues predominate over residues 50-67 (GGIGEGGAGGDGAAAGGE).

This is an uncharacterized protein from Torque teno tamarin virus (isolate So-TTV2).